The sequence spans 175 residues: Sec-independent protein translocase protein TatB (175 aa).

Residues 1 to 21 traverse the membrane as a helical segment; sequence MLDLGLSKMALIGVVALVVLG. A compositionally biased stretch (low complexity) spans 96–115; sequence VSPGGSAAADAPDGPSAASG. 2 disordered regions span residues 96-119 and 152-175; these read VSPGGSAAADAPDGPSAASGEPSW and QVQSGAARVARHRPASLRRPARFL. Residues 160–175 are compositionally biased toward basic residues; sequence VARHRPASLRRPARFL.

The protein belongs to the TatB family. The Tat system comprises two distinct complexes: a TatABC complex, containing multiple copies of TatA, TatB and TatC subunits, and a separate TatA complex, containing only TatA subunits. Substrates initially bind to the TatABC complex, which probably triggers association of the separate TatA complex to form the active translocon.

It localises to the cell inner membrane. In terms of biological role, part of the twin-arginine translocation (Tat) system that transports large folded proteins containing a characteristic twin-arginine motif in their signal peptide across membranes. Together with TatC, TatB is part of a receptor directly interacting with Tat signal peptides. TatB may form an oligomeric binding site that transiently accommodates folded Tat precursor proteins before their translocation. This chain is Sec-independent protein translocase protein TatB, found in Burkholderia pseudomallei (strain 1710b).